We begin with the raw amino-acid sequence, 481 residues long: 3-isopropylmalate dehydratase large subunit (481 aa).

[4Fe-4S] cluster contacts are provided by Cys-357, Cys-417, and Cys-420.

It belongs to the aconitase/IPM isomerase family. LeuC type 1 subfamily. As to quaternary structure, heterodimer of LeuC and LeuD. Requires [4Fe-4S] cluster as cofactor.

The enzyme catalyses (2R,3S)-3-isopropylmalate = (2S)-2-isopropylmalate. It participates in amino-acid biosynthesis; L-leucine biosynthesis; L-leucine from 3-methyl-2-oxobutanoate: step 2/4. Functionally, catalyzes the isomerization between 2-isopropylmalate and 3-isopropylmalate, via the formation of 2-isopropylmaleate. The sequence is that of 3-isopropylmalate dehydratase large subunit from Maricaulis maris (strain MCS10) (Caulobacter maris).